Reading from the N-terminus, the 85-residue chain is Putative membrane protein insertion efficiency factor (85 aa).

This sequence belongs to the UPF0161 family.

It localises to the cell inner membrane. Could be involved in insertion of integral membrane proteins into the membrane. This is Putative membrane protein insertion efficiency factor from Phenylobacterium zucineum (strain HLK1).